The chain runs to 116 residues: Large ribosomal subunit protein bL20c (116 aa).

The protein belongs to the bacterial ribosomal protein bL20 family.

The protein resides in the plastid. It is found in the chloroplast. Functionally, binds directly to 23S ribosomal RNA and is necessary for the in vitro assembly process of the 50S ribosomal subunit. It is not involved in the protein synthesizing functions of that subunit. This chain is Large ribosomal subunit protein bL20c, found in Cyanidioschyzon merolae (strain NIES-3377 / 10D) (Unicellular red alga).